The following is a 627-amino-acid chain: Carnitine O-acetyltransferase, mitochondrial (627 aa).

His-336 (proton acceptor) is an active-site residue. CoA is bound by residues Lys-418 and 422–429 (KKFKVSPD). Tyr-451, Ser-453, and Thr-464 together coordinate (R)-carnitine. Position 553 (Gln-553) interacts with CoA. The Microbody targeting signal motif lies at 625 to 627 (PKL).

It belongs to the carnitine/choline acetyltransferase family.

Its subcellular location is the peroxisome. The protein localises to the mitochondrion inner membrane. The enzyme catalyses (R)-carnitine + acetyl-CoA = O-acetyl-(R)-carnitine + CoA. Functionally, carnitine acetylase is specific for short chain fatty acids. Carnitine acetylase seems to affect the flux through the pyruvate dehydrogenase complex. It may be involved as well in the transport of acetyl-CoA into mitochondria. This Candida tropicalis (Yeast) protein is Carnitine O-acetyltransferase, mitochondrial (CAT2).